Reading from the N-terminus, the 587-residue chain is uncharacterized protein (587 aa).

Positions 1 to 21 are cleaved as a signal peptide; the sequence is MANRLLIYGLILWVSIIGSFA. Residues 22 to 541 lie on the Lumenal side of the membrane; it reads LDRNKTAQNA…LEKEVSFQRR (520 aa). An N-linked (GlcNAc...) asparagine glycan is attached at asparagine 25. Positions 44-108 are disordered; it reads GSTTNVQKEH…RNPGDSSNSF (65 aa). The segment covering 63–90 has biased composition (basic and acidic residues); it reads RTHDFRQASKVDIRQADIRENGERKEQD. Positions 91–108 are enriched in polar residues; sequence ALTQPATPRNPGDSSNSF. One can recognise an SUN domain in the interval 163–331; the sequence is NEWSEREENQ…SLIKVYGKSM (169 aa). Residues asparagine 378, asparagine 381, asparagine 408, asparagine 448, and asparagine 486 are each glycosylated (N-linked (GlcNAc...) asparagine). Residues 542-562 form a helical membrane-spanning segment; the sequence is IVYASFFAFVGLISYLLITRE. The Cytoplasmic segment spans residues 563–587; sequence LYFEDFEESKNGAIEKADIVQQAIR.

The protein belongs to the SLP1 family. In terms of assembly, interacts with EMP65.

It is found in the endoplasmic reticulum membrane. Functionally, may be involved in membrane protein folding. Required for localization of MPS3 to the nuclear envelope. This is an uncharacterized protein from Saccharomyces cerevisiae (strain ATCC 204508 / S288c) (Baker's yeast).